The chain runs to 384 residues: MDVETAEEQGGPAPPSGVPCGPCSAGAPALGGRREPKKYAVTDDYQLSKQVLGLGVNGKVLECFHRRTGQKCALKLLYDSPKARQEVDHHWQASGGPHIVRILDVYENMHHSKRCLLIIMECMEGGELFSRIQERGDQAFTEREAAEIMRDIGTAIQFLHSRNIAHRDVKPENLLYTSKDKDAVLKLTDFGFAKETTQNALQTPCYTPYYVAPEVLGPEKYDKSCDMWSLGVIMYILLCGFPPFYSNTGQAISPGMKRRIRLGQYGFPSPEWSEVSEDAKQLIRLLLKTDPTERLTITQFMNHPWINQSMVVPQTPLHTARVLQEDRDHWDEVKEEMTSALATMRVDYDQVKIKDLKTSNNRLLNKRRKKQAGSSSGSQGCNNQ.

Met-1 carries the post-translational modification N-acetylmethionine. The tract at residues 1-22 (MDVETAEEQGGPAPPSGVPCGP) is disordered. Residues 46–306 (QLSKQVLGLG…ITQFMNHPWI (261 aa)) enclose the Protein kinase domain. Residues 52–60 (LGLGVNGKV) and Lys-75 each bind ATP. Asp-168 serves as the catalytic Proton acceptor. Residue Thr-203 is modified to Phosphothreonine; by MAPK14. Residue Ser-253 is modified to Phosphoserine; by MAPK14. The residue at position 309 (Ser-309) is a Phosphoserine; by autocatalysis. Residues 309–345 (SMVVPQTPLHTARVLQEDRDHWDEVKEEMTSALATMR) are autoinhibitory helix. Position 315 is a phosphothreonine; by MAPK14 (Thr-315). Residues 337–346 (MTSALATMRV) carry the Nuclear export signal (NES) motif. The p38 MAPK-binding site stretch occupies residues 347-371 (DYDQVKIKDLKTSNNRLLNKRRKKQ). 2 short sequence motifs (bipartite nuclear localization signal) span residues 352-355 (KIKD) and 366-370 (KRRKK). The segment at 359–384 (SNNRLLNKRRKKQAGSSSGSQGCNNQ) is disordered. The span at 373 to 384 (GSSSGSQGCNNQ) shows a compositional bias: low complexity.

This sequence belongs to the protein kinase superfamily. CAMK Ser/Thr protein kinase family. In terms of assembly, heterodimer with p38-alpha/MAPK14. The heterodimer with p38-alpha/MAPK14 forms a stable complex: molecules are positioned 'face to face' so that the ATP-binding sites of both kinases are at the heterodimer interface. Interacts with TCF3 and with polycomb proteins, such as PCH2 and BMI1/PCGF4. In terms of processing, phosphorylated and activated by MAPK1/ERK2 and MAPK3/ERK1. Phosphorylated and activated by MAP kinase p38-alpha/MAPK14 at Thr-203, Ser-253 and Thr-315.

It is found in the nucleus. The protein resides in the cytoplasm. It catalyses the reaction L-seryl-[protein] + ATP = O-phospho-L-seryl-[protein] + ADP + H(+). It carries out the reaction L-threonyl-[protein] + ATP = O-phospho-L-threonyl-[protein] + ADP + H(+). Activated following phosphorylation by p38-alpha/MAPK14 following various stresses. Inhibited by ligand 5B (2'-[2-(1,3-benzodioxol-5-yl)pyrimidin-4-yl]-5',6'-dihydrospiro[piperidine-4,7'-pyrrolo[3,2-c]pyridin]- 4'(1'h)-one) and ligand P4O (2-[2-(2-fluorophenyl)pyridin-4-yl]-1,5,6,7-tetrahydro- 4h-pyrrolo[3,2-c]pyridin-4-one), 2 ATP-competitive inhibitors. Its function is as follows. Stress-activated serine/threonine-protein kinase involved in cytokines production, endocytosis, cell migration, chromatin remodeling and transcriptional regulation. Following stress, it is phosphorylated and activated by MAP kinase p38-alpha/MAPK14, leading to phosphorylation of substrates. Phosphorylates serine in the peptide sequence, Hyd-X-R-X(2)-S, where Hyd is a large hydrophobic residue. MAPKAPK2 and MAPKAPK3, share the same function and substrate specificity, but MAPKAPK3 kinase activity and level in protein expression are lower compared to MAPKAPK2. Phosphorylates HSP27/HSPB1, KRT18, KRT20, RCSD1, RPS6KA3, TAB3 and TTP/ZFP36. Mediates phosphorylation of HSP27/HSPB1 in response to stress, leading to dissociate HSP27/HSPB1 from large small heat-shock protein (sHsps) oligomers and impair their chaperone activities and ability to protect against oxidative stress effectively. Involved in inflammatory response by regulating tumor necrosis factor (TNF) and IL6 production post-transcriptionally: acts by phosphorylating AU-rich elements (AREs)-binding proteins, such as TTP/ZFP36, leading to regulate the stability and translation of TNF and IL6 mRNAs. Phosphorylation of TTP/ZFP36, a major post-transcriptional regulator of TNF, promotes its binding to 14-3-3 proteins and reduces its ARE mRNA affinity leading to inhibition of dependent degradation of ARE-containing transcript. Involved in toll-like receptor signaling pathway (TLR) in dendritic cells: required for acute TLR-induced macropinocytosis by phosphorylating and activating RPS6KA3. Also acts as a modulator of Polycomb-mediated repression. This chain is MAP kinase-activated protein kinase 3 (MAPKAPK3), found in Bos taurus (Bovine).